The sequence spans 482 residues: L-propargylglycine--L-glutamate ligase (482 aa).

The catalysed reaction is L-propargylglycine + L-glutamate + ATP = L-gamma-glutamyl-L-propargylglycine + ADP + phosphate + H(+). It functions in the pathway amino-acid metabolism. It participates in antibiotic biosynthesis. Involved in the biosynthesis of terminal alkyne-containing amino acids such as L-beta-ethynylserine, that are produced as antibiotics by S.cattleya. Catalyzes the ATP-dependent ligation of L-propargylglycine to L-glutamate to form the dipeptide L-gamma-glutamyl-L-propargylglycine. Is selective for L-propargylglycine over norvaline, allylglycine and the standard proteinogenic amino acids, except L-cysteine which can be used as a substrate to a lesser extent. In Streptantibioticus cattleyicolor (strain ATCC 35852 / DSM 46488 / JCM 4925 / NBRC 14057 / NRRL 8057) (Streptomyces cattleya), this protein is L-propargylglycine--L-glutamate ligase.